A 285-amino-acid chain; its full sequence is Ribonuclease H1 (285 aa).

Positions 72–126 (RSSSSPDGSKGQESAHEQKSQAKTSKRPREPLGEGEELPEPGPKHTRQDTEPAAV) are disordered. Positions 135-281 (MGESVIVYTD…ADRLAREGAK (147 aa)) constitute an RNase H type-1 domain. Mg(2+) is bound by residues Asp-144, Glu-185, Asp-209, and Asp-273.

This sequence belongs to the RNase H family. In terms of assembly, monomer. Mg(2+) is required as a cofactor.

The protein localises to the cytoplasm. It catalyses the reaction Endonucleolytic cleavage to 5'-phosphomonoester.. In the presence of magnesium, manganese is inhibitory. Functionally, endonuclease that specifically degrades the RNA of RNA-DNA hybrids. Plays a role in RNA polymerase II (RNAp II) transcription termination by degrading R-loop RNA-DNA hybrid formation at G-rich pause sites located downstream of the poly(A) site and behind the elongating RNAp II. In Mus musculus (Mouse), this protein is Ribonuclease H1 (Rnaseh1).